The following is a 703-amino-acid chain: UvrABC system protein B (703 aa).

The 158-residue stretch at 33-190 (TRIENGENDV…RRFVAMQYKR (158 aa)) folds into the Helicase ATP-binding domain. Position 46–53 (46–53 (GATGTGKT)) interacts with ATP. The Beta-hairpin signature appears at 99-122 (YYDYYQPEAYIPQTDTYIEKDSNI). Positions 436–589 (QIDDLLAEIK…QIAYNQEHGI (154 aa)) constitute a Helicase C-terminal domain. Residues 659–694 (ADLIRQLSEQMHTAAEQLQFELAARLRDEIRDLKKE) form the UVR domain.

Belongs to the UvrB family. In terms of assembly, forms a heterotetramer with UvrA during the search for lesions. Interacts with UvrC in an incision complex.

The protein resides in the cytoplasm. The UvrABC repair system catalyzes the recognition and processing of DNA lesions. A damage recognition complex composed of 2 UvrA and 2 UvrB subunits scans DNA for abnormalities. Upon binding of the UvrA(2)B(2) complex to a putative damaged site, the DNA wraps around one UvrB monomer. DNA wrap is dependent on ATP binding by UvrB and probably causes local melting of the DNA helix, facilitating insertion of UvrB beta-hairpin between the DNA strands. Then UvrB probes one DNA strand for the presence of a lesion. If a lesion is found the UvrA subunits dissociate and the UvrB-DNA preincision complex is formed. This complex is subsequently bound by UvrC and the second UvrB is released. If no lesion is found, the DNA wraps around the other UvrB subunit that will check the other stand for damage. The sequence is that of UvrABC system protein B from Bifidobacterium longum subsp. infantis (strain ATCC 15697 / DSM 20088 / JCM 1222 / NCTC 11817 / S12).